The primary structure comprises 235 residues: Putative N-acetylmannosamine-6-phosphate 2-epimerase (235 aa).

Belongs to the NanE family.

It carries out the reaction an N-acyl-D-glucosamine 6-phosphate = an N-acyl-D-mannosamine 6-phosphate. Its pathway is amino-sugar metabolism; N-acetylneuraminate degradation; D-fructose 6-phosphate from N-acetylneuraminate: step 3/5. Its function is as follows. Converts N-acetylmannosamine-6-phosphate (ManNAc-6-P) to N-acetylglucosamine-6-phosphate (GlcNAc-6-P). This chain is Putative N-acetylmannosamine-6-phosphate 2-epimerase, found in Edwardsiella ictaluri (strain 93-146).